The chain runs to 383 residues: BRISC and BRCA1-A complex member 2 (383 aa).

Residue Met-1 is modified to N-acetylmethionine. Ser-2 carries the phosphoserine modification. 2 UEV-like regions span residues 30 to 147 and 275 to 364; these read DATN…TLLE and IAAF…RAKA.

Belongs to the BABAM2 family. In terms of assembly, component of the ARISC complex, at least composed of UIMC1/RAP80, ABRAXAS1, BRCC3/BRCC36, BABAM2 and BABAM1/NBA1. Component of the BRCA1-A complex, at least composed of BRCA1, BARD1, UIMC1/RAP80, ABRAXAS1, BRCC3/BRCC36, BABAM2 and BABAM1/NBA1. In the BRCA1-A complex, interacts directly with ABRAXAS1, BRCC3/BRCC36 and BABAM1/NBA1. Binds polyubiquitin. Component of the BRISC complex, at least composed of ABRAXAS2, BRCC3/BRCC36, BABAM2 and BABAM1/NBA1. Identified in a complex with SHMT2 and the other subunits of the BRISC complex. Component of the BRCA1/BRCA2 containing complex (BRCC), which also contains BRCA1, BRCA2, BARD1, BRCC3/BRCC36 and RAD51. BRCC is a ubiquitin E3 ligase complex that enhances cellular survival following DNA damage. May interact with FAS and TNFRSF1A. Expressed in brain, heart, kidney, liver, lung, testis, germinal center B-cells and various mouse cell lines.

The protein localises to the cytoplasm. The protein resides in the nucleus. Its function is as follows. Component of the BRCA1-A complex, a complex that specifically recognizes 'Lys-63'-linked ubiquitinated histones H2A and H2AX at DNA lesions sites, leading to target the BRCA1-BARD1 heterodimer to sites of DNA damage at double-strand breaks (DSBs). The BRCA1-A complex also possesses deubiquitinase activity that specifically removes 'Lys-63'-linked ubiquitin on histones H2A and H2AX. In the BRCA1-A complex, it acts as an adapter that bridges the interaction between BABAM1/NBA1 and the rest of the complex, thereby being required for the complex integrity and modulating the E3 ubiquitin ligase activity of the BRCA1-BARD1 heterodimer. Probably also plays a role as a component of the BRISC complex, a multiprotein complex that specifically cleaves 'Lys-63'-linked ubiquitin. May regulate TNF-alpha signaling through its interactions with TNFRSF1A. Functionally, component of the BRCA1-A complex, a complex that specifically recognizes 'Lys-63'-linked ubiquitinated histones H2A and H2AX at DNA lesions sites, leading to target the BRCA1-BARD1 heterodimer to sites of DNA damage at double-strand breaks (DSBs). The BRCA1-A complex also possesses deubiquitinase activity that specifically removes 'Lys-63'-linked ubiquitin on histones H2A and H2AX. In the BRCA1-A complex, it acts as an adapter that bridges the interaction between BABAM1/NBA1 and the rest of the complex, thereby being required for the complex integrity and modulating the E3 ubiquitin ligase activity of the BRCA1-BARD1 heterodimer. Component of the BRISC complex, a multiprotein complex that specifically cleaves 'Lys-63'-linked ubiquitin in various substrates. Within the BRISC complex, acts as an adapter that bridges the interaction between BABAM1/NBA1 and the rest of the complex, thereby being required for the complex integrity. The BRISC complex is required for normal mitotic spindle assembly and microtubule attachment to kinetochores via its role in deubiquitinating NUMA1. The BRISC complex plays a role in interferon signaling via its role in the deubiquitination of the interferon receptor IFNAR1; deubiquitination increases IFNAR1 activity by enhancing its stability and cell surface expression. Down-regulates the response to bacterial lipopolysaccharide (LPS) via its role in IFNAR1 deubiquitination. May play a role in homeostasis or cellular differentiation in cells of neural, epithelial and germline origins. May also act as a death receptor-associated anti-apoptotic protein, which inhibits the mitochondrial apoptotic pathway. May regulate TNF-alpha signaling through its interactions with TNFRSF1A; however these effects may be indirect. This is BRISC and BRCA1-A complex member 2 (Babam2) from Mus musculus (Mouse).